Here is a 126-residue protein sequence, read N- to C-terminus: Ribosome-binding factor A (126 aa).

The protein belongs to the RbfA family. As to quaternary structure, monomer. Binds 30S ribosomal subunits, but not 50S ribosomal subunits or 70S ribosomes.

It localises to the cytoplasm. In terms of biological role, one of several proteins that assist in the late maturation steps of the functional core of the 30S ribosomal subunit. Associates with free 30S ribosomal subunits (but not with 30S subunits that are part of 70S ribosomes or polysomes). Required for efficient processing of 16S rRNA. May interact with the 5'-terminal helix region of 16S rRNA. The chain is Ribosome-binding factor A from Haemophilus ducreyi (strain 35000HP / ATCC 700724).